The sequence spans 124 residues: Large ribosomal subunit protein bL19 (124 aa).

Belongs to the bacterial ribosomal protein bL19 family.

Its function is as follows. This protein is located at the 30S-50S ribosomal subunit interface and may play a role in the structure and function of the aminoacyl-tRNA binding site. This is Large ribosomal subunit protein bL19 from Cereibacter sphaeroides (strain ATCC 17029 / ATH 2.4.9) (Rhodobacter sphaeroides).